A 272-amino-acid chain; its full sequence is Putative hydro-lyase BBta_2883 (272 aa).

This sequence belongs to the D-glutamate cyclase family.

The sequence is that of Putative hydro-lyase BBta_2883 from Bradyrhizobium sp. (strain BTAi1 / ATCC BAA-1182).